A 218-amino-acid chain; its full sequence is Testis expressed protein 56 (218 aa).

The chain is Testis expressed protein 56 (Tex56) from Rattus norvegicus (Rat).